Here is a 325-residue protein sequence, read N- to C-terminus: MPRPGRNTYSDQKPPYSYISLTAMAIQSSPEKMLPLSEIYKFIMDRFPYYRENTQRWQNSLRHNLSFNDCFIKIPRRPDQPGKGSFWALHPSCGDMFENGSFLRRRKRFKVLKSDHLAPSKPADAAQYLQQQAKLRLSALAASGTHLPQMPAAAYNLGGVAQPSGFKHPFAIENIIAREYKMPGGLAFSAMQPVPAAYPLPNQLTTMGSSLGTGWPHVYGSAGMIDSATPISMASGDYSAYGVPLKPLCHAAGQTLPAIPVPIKPTPAAVPALPALPAPIPTLLSNSPPSLSPTSSQTATSQSSPATPSETLTSPASALHSVAVH.

The fork-head DNA-binding region spans 12 to 103 (QKPPYSYISL…GDMFENGSFL (92 aa)). Residues 284-309 (LSNSPPSLSPTSSQTATSQSSPATPS) show a composition bias toward low complexity. The interval 284 to 325 (LSNSPPSLSPTSSQTATSQSSPATPSETLTSPASALHSVAVH) is disordered.

Its subcellular location is the nucleus. Functionally, transcription factor expressed by neural progenitor cells in specific regions of the embryonic neuroepithelium. Essential for the mammillary nuclei maintenance. Negatively regulates the proliferation of oligodendrocyte progenitors and promotes oligodendrocyte maturation. Also expressed in mammary glands, plays a role in lactation, controls development of mammary glands and the inferior colliculi of the midbrain in the central nervous system that regulates the milk-ejection reflex. The sequence is that of Forkhead box protein B1 (FOXB1) from Homo sapiens (Human).